Here is a 160-residue protein sequence, read N- to C-terminus: Succinate dehydrogenase assembly factor 2-B, mitochondrial (160 aa).

The transit peptide at 1-23 directs the protein to the mitochondrion; that stretch reads MLRQLKLTLNISRWIFMPWQRHA.

Belongs to the SDHAF2 family. As to quaternary structure, interacts with the flavoprotein subunit within the SDH catalytic dimer.

It localises to the mitochondrion matrix. Plays an essential role in the assembly of succinate dehydrogenase (SDH), an enzyme complex (also referred to as respiratory complex II) that is a component of both the tricarboxylic acid (TCA) cycle and the mitochondrial electron transport chain, and which couples the oxidation of succinate to fumarate with the reduction of ubiquinone (coenzyme Q) to ubiquinol. Required for flavinylation (covalent attachment of FAD) of the flavoprotein subunit of the SDH catalytic dimer. The sequence is that of Succinate dehydrogenase assembly factor 2-B, mitochondrial from Drosophila pseudoobscura pseudoobscura (Fruit fly).